The sequence spans 156 residues: Ribosome maturation factor RimP (156 aa).

The protein belongs to the RimP family.

It localises to the cytoplasm. Its function is as follows. Required for maturation of 30S ribosomal subunits. In Bacillus velezensis (strain DSM 23117 / BGSC 10A6 / LMG 26770 / FZB42) (Bacillus amyloliquefaciens subsp. plantarum), this protein is Ribosome maturation factor RimP.